Consider the following 286-residue polypeptide: Homeobox-leucine zipper protein ATHB-20 (286 aa).

Positions 84 to 143 form a DNA-binding region, homeobox; that stretch reads LGEKKKRLQLEQVKALEKSFELGNKLEPERKIQLAKALGMQPRQIAIWFQNRRARWKTRQ. Positions 144-179 are leucine-zipper; the sequence is LERDYDSLKKQFESLKSDNASLLAYNKKLLAEVMAL.

It belongs to the HD-ZIP homeobox family. Class I subfamily. As to expression, widely expressed.

It localises to the nucleus. Its function is as follows. Probable transcription factor. The chain is Homeobox-leucine zipper protein ATHB-20 (ATHB-20) from Arabidopsis thaliana (Mouse-ear cress).